Consider the following 357-residue polypeptide: CD4+ T-cell-stimulating antigen (357 aa).

The signal sequence occupies residues 1–22 (MKKRTFALALSMIIASGVVLGA). Residue C23 is the site of N-palmitoyl cysteine attachment. A lipid anchor (S-diacylglycerol cysteine) is attached at C23.

Belongs to the BMP lipoprotein family.

It localises to the cell membrane. This Listeria innocua serovar 6a (strain ATCC BAA-680 / CLIP 11262) protein is CD4+ T-cell-stimulating antigen (tcsA).